The sequence spans 200 residues: Small ribosomal subunit protein uS4 (200 aa).

The 64-residue stretch at 92-155 (SRLDAVVYSL…QNLDIIKESV (64 aa)) folds into the S4 RNA-binding domain.

It belongs to the universal ribosomal protein uS4 family. As to quaternary structure, part of the 30S ribosomal subunit. Contacts protein S5. The interaction surface between S4 and S5 is involved in control of translational fidelity.

One of the primary rRNA binding proteins, it binds directly to 16S rRNA where it nucleates assembly of the body of the 30S subunit. In terms of biological role, with S5 and S12 plays an important role in translational accuracy. This Staphylococcus haemolyticus (strain JCSC1435) protein is Small ribosomal subunit protein uS4.